We begin with the raw amino-acid sequence, 290 residues long: UDP-N-acetylenolpyruvoylglucosamine reductase (290 aa).

The 168-residue stretch at 20-187 (GVGGESEMWF…SRVRLKLRPS (168 aa)) folds into the FAD-binding PCMH-type domain. Residue Arg167 is part of the active site.

It belongs to the MurB family. The cofactor is FAD.

It is found in the cytoplasm. The catalysed reaction is UDP-N-acetyl-alpha-D-muramate + NADP(+) = UDP-N-acetyl-3-O-(1-carboxyvinyl)-alpha-D-glucosamine + NADPH + H(+). Its pathway is cell wall biogenesis; peptidoglycan biosynthesis. Cell wall formation. This chain is UDP-N-acetylenolpyruvoylglucosamine reductase, found in Deinococcus radiodurans (strain ATCC 13939 / DSM 20539 / JCM 16871 / CCUG 27074 / LMG 4051 / NBRC 15346 / NCIMB 9279 / VKM B-1422 / R1).